Reading from the N-terminus, the 635-residue chain is DNA primase (635 aa).

A CHC2-type zinc finger spans residues 41–65; it reads CPFHDEKSPSFSVSPAKQMYYCFGC. The region spanning 265 to 348 is the Toprim domain; that stretch reads DEAILVEGYF…SGQVNLRILN (84 aa). Mg(2+) contacts are provided by E271, D317, and D319.

Belongs to the DnaG primase family. In terms of assembly, monomer. Interacts with DnaB. The cofactor is Zn(2+). It depends on Mg(2+) as a cofactor.

The enzyme catalyses ssDNA + n NTP = ssDNA/pppN(pN)n-1 hybrid + (n-1) diphosphate.. In terms of biological role, RNA polymerase that catalyzes the synthesis of short RNA molecules used as primers for DNA polymerase during DNA replication. The polypeptide is DNA primase (Synechocystis sp. (strain ATCC 27184 / PCC 6803 / Kazusa)).